The sequence spans 741 residues: MSNIIVEHQYSHRLKLTVVRAENVTKGAFGDLLDTPDPYVELSVPTTPESRKRTRHINNDINPKWNETFEFILDPNQSNVLEVTLMDANYVMDETLGTAKYSLSKLKVAQMEHVTLSIGKTTKVFLDLLLEVCASTDLRFSMTLCDQEKLFMQTRRDRVMLSIKKLLKMENPRFLPSSPREVPTIAILGSGGGFRAMVGFSGVMKALYESGVFDCATYVAGLSGSTWYMSMLYSHPEFPAKGPGDINKELMNRVSNNPLKLLLPQNINRYVKALWKKKSAGQPVTFTDIFGMLIGETLIPGRMNIKLSSLKGKINEGQSPLPLFTCLHVKPDVSELMFADWVEFSPYEIGMAKYGTFMSPGLFGSKFFMGSVVKQYEENPLHFLMGVWGSAFSILFNRVLGVKETTSSSTMEEELEQIKPEHIVGDDSADNEEETQRGGTESADAEDERQRHAQASWVQRMLTSIMGDTTLFTTREGRAGKVHNFMLGLNLNSTLPFSPFSGITHQTSLEEEVDAVTDPDEFERIYEPLDVKSKKIHVVDSGLTFNLPYPLILRCQRGVDLIISFDFSARPSDSSPPFKELLLAEKWARMNKLPFPKIDSKVFDREGLKECYVFKPAKGDKNCPTIIHFVLANINFRNFKAPGVPRDSDKDIEFGDFDIFDEPASPYSTFNFKYNNQAFKRLHDLMEFNTLNNIEVIKEAIKDSILLRRENPARCSVSLSLSEIENKKFLKRDNSIAKRPT.

The C2 domain maps to 1–116 (MSNIIVEHQY…KVAQMEHVTL (116 aa)). Residues 1–172 (MSNIIVEHQY…IKKLLKMENP (172 aa)) are phospholipid binding. Ca(2+) contacts are provided by D34, T35, D37, N59, D87, A88, and N89. Residues 132 to 729 (VCASTDLRFS…SLSEIENKKF (598 aa)) form the PLA2c domain. The active-site Nucleophile is the S223. A disordered region spans residues 406-453 (TSSSTMEEELEQIKPEHIVGDDSADNEEETQRGGTESADAEDERQRHA). The segment covering 416–425 (EQIKPEHIVG) has biased composition (basic and acidic residues). Residue S498 is modified to Phosphoserine; by MAPK. Catalysis depends on D540, which acts as the Proton acceptor.

Activated by phosphorylation on a serine residue.

The protein localises to the cytoplasm. The protein resides in the cytoplasmic vesicle. It catalyses the reaction a 1,2-diacyl-sn-glycero-3-phosphocholine + H2O = a 1-acyl-sn-glycero-3-phosphocholine + a fatty acid + H(+). It carries out the reaction a 1-acyl-sn-glycero-3-phosphocholine + H2O = sn-glycerol 3-phosphocholine + a fatty acid + H(+). Its activity is regulated as follows. Stimulated by agonists such as ATP, EGF, thrombin and bradykinin as well as by cytosolic Ca(2+). Selectively hydrolyzes arachidonyl phospholipids in the sn-2 position releasing arachidonic acid. Together with its lysophospholipid activity, it is implicated in the initiation of the inflammatory response. The chain is Cytosolic phospholipase A2 (pla2g4a) from Danio rerio (Zebrafish).